The chain runs to 99 residues: Beta-defensin 127 (99 aa).

Residues 1-20 (MGLFMIIAILLFQKPTVTEQ) form the signal peptide. Cystine bridges form between C24–C53, C33–C47, and C37–C54. Residues 66–99 (ITKPPRPKPATLALTLQDYVTIIENFPSLKTQST) constitute a propeptide that is removed on maturation.

Belongs to the beta-defensin family.

Its subcellular location is the secreted. Has antibacterial activity. This is Beta-defensin 127 (DEFB127) from Homo sapiens (Human).